The following is a 177-amino-acid chain: ATP synthase subunit b, chloroplastic (177 aa).

A helical transmembrane segment spans residues 26 to 44 (IINLSIVLFVVIRFLGEAL).

This sequence belongs to the ATPase B chain family. F-type ATPases have 2 components, F(1) - the catalytic core - and F(0) - the membrane proton channel. F(1) has five subunits: alpha(3), beta(3), gamma(1), delta(1), epsilon(1). F(0) has four main subunits: a(1), b(1), b'(1) and c(10-14). The alpha and beta chains form an alternating ring which encloses part of the gamma chain. F(1) is attached to F(0) by a central stalk formed by the gamma and epsilon chains, while a peripheral stalk is formed by the delta, b and b' chains.

The protein localises to the plastid. It localises to the chloroplast thylakoid membrane. F(1)F(0) ATP synthase produces ATP from ADP in the presence of a proton or sodium gradient. F-type ATPases consist of two structural domains, F(1) containing the extramembraneous catalytic core and F(0) containing the membrane proton channel, linked together by a central stalk and a peripheral stalk. During catalysis, ATP synthesis in the catalytic domain of F(1) is coupled via a rotary mechanism of the central stalk subunits to proton translocation. Functionally, component of the F(0) channel, it forms part of the peripheral stalk, linking F(1) to F(0). The polypeptide is ATP synthase subunit b, chloroplastic (Bigelowiella natans (Pedinomonas minutissima)).